Here is a 144-residue protein sequence, read N- to C-terminus: Ribonuclease H (144 aa).

One can recognise an RNase H type-1 domain in the interval 1–136 (MKIVTLFSDG…CDQMARNEAL (136 aa)). Mg(2+) is bound by residues Asp-9, Glu-47, Asp-69, and Asp-128.

It belongs to the RNase H family. As to quaternary structure, monomer. The cofactor is Mg(2+).

The protein localises to the cytoplasm. The enzyme catalyses Endonucleolytic cleavage to 5'-phosphomonoester.. In terms of biological role, endonuclease that specifically degrades the RNA of RNA-DNA hybrids. The chain is Ribonuclease H from Campylobacter concisus (strain 13826).